A 483-amino-acid chain; its full sequence is MLTLDTLNVMLAVSEEGLIEEMIIALLASPQLAVFFEKFPRLKAAITDDVPRWREALRSRLKDARVPPELTEEVMCYQQSQLLSTPQFIVQLPQILDLLHRLNSPWAEQARQLVDANSAITSALHTLFLQRWRLSLIVQATTLNQQLLEEEREQLLSEVQERMTLSGQLEPILADNNTAAGRLWDMSAGQLKRGDYQLIVKYGEFLNEQPELKRLAEQLGRSREAKSIPRNDAQMETFRTMVREPATVPEQVDGLQQSDDILRLLPPELATLGITELEYEFYRRLVEKQLLTYRLHGESWREKVIERPVVHKDYDEQPRGPFIVCVDTSGSMGGFNEQCAKAFCLALMRIALAENRRCYIMLFSTEIVRYELSGPQGIEQAIRFLSQQFRGGTDLASCFRAIMERLQSREWFDADAVVISDFIAQRLPDDVTSKVKELQRVHQHRFHAVAMSAHGKPGIMRIFDHIWRFDTGMRSRLLRRWRR.

Belongs to the ViaA family. Homodimer. Interacts with RavA.

It localises to the cytoplasm. In terms of biological role, component of the RavA-ViaA chaperone complex, which may act on the membrane to optimize the function of some of the respiratory chains. ViaA stimulates the ATPase activity of RavA. The sequence is that of Regulatory protein ViaA from Escherichia coli O9:H4 (strain HS).